We begin with the raw amino-acid sequence, 90 residues long: Elongation factor 1-beta (90 aa).

The protein belongs to the EF-1-beta/EF-1-delta family.

Promotes the exchange of GDP for GTP in EF-1-alpha/GDP, thus allowing the regeneration of EF-1-alpha/GTP that could then be used to form the ternary complex EF-1-alpha/GTP/AAtRNA. This is Elongation factor 1-beta from Staphylothermus marinus (strain ATCC 43588 / DSM 3639 / JCM 9404 / F1).